The primary structure comprises 330 residues: Probable cytosolic iron-sulfur protein assembly protein ciao1 (330 aa).

7 WD repeats span residues 14 to 53, 59 to 98, 103 to 142, 148 to 187, 192 to 231, 244 to 283, and 295 to 330; these read HPDSRCWYVAWNPAGTTLATCGGDRAIRIWGKEGDSWECK, GHQRTVRKVAWSPCGKYLASASFDATTCIWKKTDEDFECL, GHENEVKCVAWAPSGSLLATCSRDKSVWIWEVDEEDEYEC, SHTQDVKHVVWHPTQELLASASYDNKICIYKEEDDDWECR, GHESTVWSLTFDPEGRRLASCSDDRTVKIWKESTTGDGSS, FHGRTIYDIAWCRLTGALATACGDDGVRVFSEDPTADPEQ, and AHNQDVNCVSWNPKEAGLLATCSDNGEFAIWKYNSA.

Belongs to the WD repeat CIA1 family. Component of the CIA complex.

In terms of biological role, key component of the cytosolic iron-sulfur protein assembly (CIA) complex, a multiprotein complex that mediates the incorporation of iron-sulfur cluster into extramitochondrial Fe/S proteins. The protein is Probable cytosolic iron-sulfur protein assembly protein ciao1 (ciao1) of Danio rerio (Zebrafish).